A 526-amino-acid polypeptide reads, in one-letter code: Probable feruloyl esterase B-2 (526 aa).

A signal peptide spans 1–18; the sequence is MTKLSLLPLLTLASAVLA. Cystine bridges form between Cys27/Cys74 and Cys62/Cys113. Asn52 is a glycosylation site (N-linked (GlcNAc...) asparagine). An N-linked (GlcNAc...) asparagine glycan is attached at Asn137. 4 cysteine pairs are disulfide-bonded: Cys186-Cys441, Cys255-Cys272, Cys281-Cys291, and Cys503-Cys525. The Acyl-ester intermediate role is filled by Ser187. An N-linked (GlcNAc...) asparagine glycan is attached at Asn233. 5 residues coordinate Ca(2+): Asp256, Asp259, Ala261, Asp263, and Ile265. Active-site charge relay system residues include Asp400 and His440. A glycan (N-linked (GlcNAc...) asparagine) is linked at Asn516.

This sequence belongs to the tannase family.

The protein resides in the secreted. It catalyses the reaction feruloyl-polysaccharide + H2O = ferulate + polysaccharide.. In terms of biological role, involved in degradation of plant cell walls. Hydrolyzes the feruloyl-arabinose ester bond in arabinoxylans as well as the feruloyl-galactose and feruloyl-arabinose ester bonds in pectin. This is Probable feruloyl esterase B-2 (faeB-2) from Aspergillus fumigatus (strain ATCC MYA-4609 / CBS 101355 / FGSC A1100 / Af293) (Neosartorya fumigata).